The following is a 101-amino-acid chain: NAD(P)H-quinone oxidoreductase subunit 4L, chloroplastic (101 aa).

3 helical membrane-spanning segments follow: residues 2–22 (MLEH…YGLI), 32–52 (MCLE…SDLF), and 61–81 (IFSI…PAIV).

It belongs to the complex I subunit 4L family. In terms of assembly, NDH is composed of at least 16 different subunits, 5 of which are encoded in the nucleus.

Its subcellular location is the plastid. It localises to the chloroplast thylakoid membrane. It catalyses the reaction a plastoquinone + NADH + (n+1) H(+)(in) = a plastoquinol + NAD(+) + n H(+)(out). The enzyme catalyses a plastoquinone + NADPH + (n+1) H(+)(in) = a plastoquinol + NADP(+) + n H(+)(out). Functionally, NDH shuttles electrons from NAD(P)H:plastoquinone, via FMN and iron-sulfur (Fe-S) centers, to quinones in the photosynthetic chain and possibly in a chloroplast respiratory chain. The immediate electron acceptor for the enzyme in this species is believed to be plastoquinone. Couples the redox reaction to proton translocation, and thus conserves the redox energy in a proton gradient. This chain is NAD(P)H-quinone oxidoreductase subunit 4L, chloroplastic, found in Nymphaea alba (White water-lily).